The sequence spans 1134 residues: MMS19 nucleotide excision repair protein homolog (1134 aa).

4 HEAT repeats span residues 959–998 (QRCF…NVPV), 1002–1047 (LDNT…KGQQ), 1050–1089 (SDNA…LPHR), and 1092–1130 (YPFR…ITSG).

This sequence belongs to the MET18/MMS19 family. In terms of assembly, part of a complex composed of AE7, CIA1, MMS19 and NAR1. Interacts with AE7.

The protein localises to the nucleus. Its subcellular location is the cytoplasm. In terms of biological role, may select specific target apoproteins to which a Fe-S cluster produced by the cytosolic iron-sulfur (Fe-S) protein assembly (CIA) pathway is transferred. This is MMS19 nucleotide excision repair protein homolog from Arabidopsis thaliana (Mouse-ear cress).